The primary structure comprises 404 residues: Nicotinate phosphoribosyltransferase (404 aa).

Phosphohistidine; by autocatalysis is present on H224.

It belongs to the NAPRTase family. Transiently phosphorylated on a His residue during the reaction cycle. Phosphorylation strongly increases the affinity for substrates and increases the rate of nicotinate D-ribonucleotide production. Dephosphorylation regenerates the low-affinity form of the enzyme, leading to product release.

The enzyme catalyses nicotinate + 5-phospho-alpha-D-ribose 1-diphosphate + ATP + H2O = nicotinate beta-D-ribonucleotide + ADP + phosphate + diphosphate. It participates in cofactor biosynthesis; NAD(+) biosynthesis; nicotinate D-ribonucleotide from nicotinate: step 1/1. Its function is as follows. Catalyzes the synthesis of beta-nicotinate D-ribonucleotide from nicotinate and 5-phospho-D-ribose 1-phosphate at the expense of ATP. The chain is Nicotinate phosphoribosyltransferase from Proteus mirabilis (strain HI4320).